Consider the following 260-residue polypeptide: MICOS complex subunit mic25-a (260 aa).

The disordered stretch occupies residues M1–Q92. A lipid anchor (N-myristoyl glycine) is attached at G2. Residues R28–D39 are compositionally biased toward basic and acidic residues. Low complexity predominate over residues S48–S64. The stretch at A94–E187 forms a coiled coil. A CHCH domain is found at D213–L255. Short sequence motifs (cx9C motif) lie at residues C216–C226 and C237–C247. 2 cysteine pairs are disulfide-bonded: C216/C247 and C226/C237.

This sequence belongs to the MICOS complex subunit Mic19 family. Metazoan Mic25 subfamily. Component of the mitochondrial contact site and cristae organizing system (MICOS) complex (also known as MINOS or MitOS complex).

The protein resides in the mitochondrion inner membrane. Component of the MICOS complex, a large protein complex of the mitochondrial inner membrane that plays crucial roles in the maintenance of crista junctions, inner membrane architecture, and formation of contact sites to the outer membrane. This Xenopus laevis (African clawed frog) protein is MICOS complex subunit mic25-a (chchd6-a).